The chain runs to 670 residues: Probable Rho-GTPase-activating protein 9 (670 aa).

Residues 3 to 392 form the F-BAR domain; it reads DGFSNSFWSR…SFKNLDSLRD (390 aa). The disordered stretch occupies residues 141–161; the sequence is NSKKSNLTDRKPIPTSRKSNK. The Rho-GAP domain maps to 425 to 622; sequence SSLTEDNLIV…DLINEFENLF (198 aa). A Phosphothreonine modification is found at threonine 640. A compositionally biased stretch (polar residues) spans 641–663; sequence PITTSPQKLKLPRSSSPCKNPSP. Residues 641–670 are disordered; the sequence is PITTSPQKLKLPRSSSPCKNPSPTRRFRPF. Position 645 is a phosphoserine (serine 645).

The protein resides in the cytoplasm. The sequence is that of Probable Rho-GTPase-activating protein 9 (rga9) from Schizosaccharomyces pombe (strain 972 / ATCC 24843) (Fission yeast).